The chain runs to 242 residues: ATP synthase subunit a (242 aa).

5 helical membrane-spanning segments follow: residues 21–41 (LSSIMMLIITAVIVFVIAIIC), 79–99 (FHFLAVTLIFFIFVSNMLGLP), 116–136 (DATVTLTLSTLIILLTHFYGV), 173–193 (LYGNIFAGELLLGLLAGLVTG), and 198–218 (AWGWIIGLPGLVVWQGFSIFI).

The protein belongs to the ATPase A chain family. In terms of assembly, F-type ATPases have 2 components, CF(1) - the catalytic core - and CF(0) - the membrane proton channel. CF(1) has five subunits: alpha(3), beta(3), gamma(1), delta(1), epsilon(1). CF(0) has three main subunits: a(1), b(2) and c(9-12). The alpha and beta chains form an alternating ring which encloses part of the gamma chain. CF(1) is attached to CF(0) by a central stalk formed by the gamma and epsilon chains, while a peripheral stalk is formed by the delta and b chains.

It is found in the cell membrane. Functionally, key component of the proton channel; it plays a direct role in the translocation of protons across the membrane. The sequence is that of ATP synthase subunit a from Staphylococcus saprophyticus subsp. saprophyticus (strain ATCC 15305 / DSM 20229 / NCIMB 8711 / NCTC 7292 / S-41).